A 620-amino-acid polypeptide reads, in one-letter code: Siderophore iron transporter ARN2 (620 aa).

Residues 1–42 (MIEVPEDNRSSQTKRKNTEKNCNELMVDEKMDDDSSPRDEMK) form a disordered region. The segment covering 16-42 (KNTEKNCNELMVDEKMDDDSSPRDEMK) has biased composition (basic and acidic residues). 14 helical membrane passes run 71-93 (IFLF…RGTY), 106-128 (LIST…FGGL), 135-152 (LTLF…TIIQ), 162-184 (AAGA…LMLS), 191-213 (WRLF…SGSV), 223-245 (WSWN…ILCM), 286-308 (VVGV…LAGG), 318-335 (IIGP…FIYW), 355-377 (VWAP…GYLY), 392-414 (TRII…LIVT), 421-438 (SYII…GLFY), 448-470 (GGII…PTIV), 491-513 (VFRI…SLYP), and 561-578 (VIVA…TFCV).

It belongs to the major facilitator superfamily.

Its subcellular location is the endosome membrane. Functionally, involved in the transport of siderophore triacestylfusarinine C and so has a role in iron homeostasis. In Saccharomyces cerevisiae (strain ATCC 204508 / S288c) (Baker's yeast), this protein is Siderophore iron transporter ARN2 (ARN2).